Consider the following 356-residue polypeptide: Protein MGF 360-19R (356 aa).

The stretch at 61–93 is one ANK repeat; it reads LLNTALMKAVQENNYELIMLFTEWGANINYGLL.

Belongs to the asfivirus MGF 360 family.

Plays a role in virus cell tropism, and may be required for efficient virus replication in macrophages. The sequence is that of Protein MGF 360-19R from African swine fever virus (isolate Pig/Kenya/KEN-50/1950) (ASFV).